The following is a 320-amino-acid chain: 1-aminocyclopropane-1-carboxylate oxidase (320 aa).

The Fe2OG dioxygenase domain maps to 156 to 256; it reads PTFGTKVSNY…RMSIASFYNP (101 aa). Residues histidine 180, aspartate 182, and histidine 237 each contribute to the Fe cation site.

It belongs to the iron/ascorbate-dependent oxidoreductase family. Fe cation serves as cofactor.

It catalyses the reaction 1-aminocyclopropane-1-carboxylate + L-ascorbate + O2 = ethene + L-dehydroascorbate + hydrogen cyanide + CO2 + 2 H2O. It functions in the pathway alkene biosynthesis; ethylene biosynthesis via S-adenosyl-L-methionine; ethylene from S-adenosyl-L-methionine: step 2/2. The polypeptide is 1-aminocyclopropane-1-carboxylate oxidase (ACO) (Brassica juncea (Indian mustard)).